An 82-amino-acid polypeptide reads, in one-letter code: Cytochrome c-551 (82 aa).

Heme c contacts are provided by Cys12, Cys15, His16, and Met61.

Binds 1 heme c group covalently per subunit.

This is a prokaryotic monoheme cytochrome, unreactive with mitochondrial cytochrome C oxidase or reductase. It functions in nitrite and nitrate respiration in Pseudomonas, but it is also found in other bacteria. The sequence is that of Cytochrome c-551 from Pseudomonas denitrificans.